Here is a 387-residue protein sequence, read N- to C-terminus: Phosphoglycerate kinase (387 aa).

Residues 21–23 (DLN), arginine 36, 59–62 (HLGR), arginine 113, and arginine 146 each bind substrate. Residues lysine 197, glutamate 314, and 340–343 (GGDT) each bind ATP.

Belongs to the phosphoglycerate kinase family. As to quaternary structure, monomer.

The protein resides in the cytoplasm. It catalyses the reaction (2R)-3-phosphoglycerate + ATP = (2R)-3-phospho-glyceroyl phosphate + ADP. It participates in carbohydrate degradation; glycolysis; pyruvate from D-glyceraldehyde 3-phosphate: step 2/5. The polypeptide is Phosphoglycerate kinase (Pseudomonas syringae pv. syringae (strain B728a)).